The primary structure comprises 425 residues: MLDQRLVRDNPDLIANELGRRGITLDLTGLQLIAQQQRNLEEQRSSLQAEGNRIGKEVGQRIQQGSDPKASDVAELRQQGNLIKQKVAVLEDEEKQLSARLREQLLSLPNLPSPDCPEGRDENDNQERHRWGKPREGKDLLEHWSIAERLKLFETERSVRIAQSRFVTLMGQGARLERALINFMLDLHTSKGYREVMPPVLVNTASLTGSGQLPKFAEESFRCAEDDLWLTPTAEVPVTSLHRDEIIPAEQLPLRYAAYSPCFRREAGSYGRDTRGLIRLHQFNKVELYWFVHPDHSQAAHAQITADAEAVLQALELPYRVIELCTGDLGFSSSRTYDLEVWLPGAGAFREISSCSICGDFQARRSAIRTKDEKGTRLIHTLNGSGLAVGRTMAALLETGQQSDGSVLLPKALVPYFGNDRLEPE.

Disordered regions lie at residues 43–69 (QRSS…SDPK) and 108–134 (LPNL…WGKP). Positions 117 to 134 (PEGRDENDNQERHRWGKP) are enriched in basic and acidic residues. 233–235 (TAE) provides a ligand contact to L-serine. ATP is bound at residue 264 to 266 (RRE). Glutamate 287 lines the L-serine pocket. 351-354 (EISS) serves as a coordination point for ATP. Serine 385 is a binding site for L-serine.

It belongs to the class-II aminoacyl-tRNA synthetase family. Type-1 seryl-tRNA synthetase subfamily. As to quaternary structure, homodimer. The tRNA molecule binds across the dimer.

It localises to the cytoplasm. It catalyses the reaction tRNA(Ser) + L-serine + ATP = L-seryl-tRNA(Ser) + AMP + diphosphate + H(+). The catalysed reaction is tRNA(Sec) + L-serine + ATP = L-seryl-tRNA(Sec) + AMP + diphosphate + H(+). The protein operates within aminoacyl-tRNA biosynthesis; selenocysteinyl-tRNA(Sec) biosynthesis; L-seryl-tRNA(Sec) from L-serine and tRNA(Sec): step 1/1. Functionally, catalyzes the attachment of serine to tRNA(Ser). Is also able to aminoacylate tRNA(Sec) with serine, to form the misacylated tRNA L-seryl-tRNA(Sec), which will be further converted into selenocysteinyl-tRNA(Sec). This Prochlorococcus marinus (strain MIT 9313) protein is Serine--tRNA ligase.